The primary structure comprises 406 residues: Autotransporter heptosyltransferase TibC (406 aa).

ADP-D-glycero-beta-D-manno-heptose-binding residues include Thr-107, Leu-108, and Gly-109. Asp-110 acts as the Proton acceptor in catalysis. 7 residues coordinate ADP-D-glycero-beta-D-manno-heptose: Gln-224, Thr-226, Lys-230, Arg-257, Leu-281, Gly-302, and Glu-326. Residues Cys-339, Cys-342, Cys-358, and Cys-370 each coordinate Fe(3+).

It belongs to the glycosyltransferase 9 family. Homododecamer composed of 6 homodimers forming a ring. The cofactor is Fe(3+).

It catalyses the reaction ADP-D-glycero-beta-D-manno-heptose + L-seryl-[protein] = O-(D-glycero-alpha-D-manno-heptosyl)-L-seryl-[protein] + ADP + H(+). In terms of biological role, glycosylates adhesin TibA. Specifically adds anomer D-glycero-beta-D-manno-heptose. Cannot use ADP-L-glycero-beta-D-manno-heptose as a sugar donor. The protein is Autotransporter heptosyltransferase TibC of Escherichia coli O78:H11 (strain H10407 / ETEC).